Reading from the N-terminus, the 504-residue chain is Maturase K (504 aa).

The protein belongs to the intron maturase 2 family. MatK subfamily.

Its subcellular location is the plastid. The protein localises to the chloroplast. Usually encoded in the trnK tRNA gene intron. Probably assists in splicing its own and other chloroplast group II introns. In Quercus suber (Cork oak), this protein is Maturase K.